The sequence spans 506 residues: Exopolysaccharide phosphotransferase NFA_48680 (506 aa).

Residues 484–506 form a disordered region; sequence PAPWERVSAPSRRPLPESTAGAA.

Belongs to the stealth family.

This is Exopolysaccharide phosphotransferase NFA_48680 from Nocardia farcinica (strain IFM 10152).